The sequence spans 562 residues: Phosphoglucomutase-1 (562 aa).

An N-acetylmethionine modification is found at M1. Position 16 is an N6-acetyllysine (K16). R23 provides a ligand contact to alpha-D-glucose 1,6-bisphosphate. Position 115 is a phosphothreonine (T115). S117 is an alpha-D-glucose 1,6-bisphosphate binding site. Residue S117 is the Phosphoserine intermediate of the active site. Residue S117 participates in Mg(2+) binding. A phosphoserine mark is found at S117 and S134. T185 carries the post-translational modification Phosphothreonine. Residues S206 and S213 each carry the phosphoserine modification. Residues D288, D290, and D292 each coordinate Mg(2+). 2 residues coordinate alpha-D-glucose 1,6-bisphosphate: D292 and R293. K349 is modified (N6-acetyllysine). The residue at position 353 (Y353) is a Phosphotyrosine. T357 provides a ligand contact to alpha-D-glucose 1,6-bisphosphate. Residue S369 is modified to Phosphoserine. Positions 376, 378, and 389 each coordinate alpha-D-glucose 1,6-bisphosphate. Phosphoserine is present on S378. The residue at position 419 (K419) is an N6-succinyllysine. At T467 the chain carries Phosphothreonine; by PAK1. Phosphoserine occurs at positions 477, 485, and 505. T507 carries the phosphothreonine modification. S509 and S541 each carry phosphoserine.

Belongs to the phosphohexose mutase family. In terms of assembly, monomer. Mg(2+) serves as cofactor. Post-translationally, phosphorylation at Thr-467 by PAK1 significantly enhances enzymatic activity.

The protein resides in the cytoplasm. The catalysed reaction is alpha-D-glucose 1-phosphate = alpha-D-glucose 6-phosphate. It carries out the reaction O-phospho-L-seryl-[protein] + alpha-D-glucose 1-phosphate = alpha-D-glucose 1,6-bisphosphate + L-seryl-[protein]. The enzyme catalyses alpha-D-glucose 1,6-bisphosphate + L-seryl-[protein] = O-phospho-L-seryl-[protein] + alpha-D-glucose 6-phosphate. In terms of biological role, catalyzes the reversible isomerization of alpha-D-glucose 1-phosphate to alpha-D-glucose 6-phosphate. The mechanism proceeds via the intermediate compound alpha-D-glucose 1,6-bisphosphate. This enzyme participates in both the breakdown and synthesis of glucose. The sequence is that of Phosphoglucomutase-1 (PGM1) from Macaca fascicularis (Crab-eating macaque).